The sequence spans 494 residues: Serine/threonine-protein kinase cst-1 (494 aa).

A disordered region spans residues 1–27; it reads MPPSTDSSRRNSEEGFSDGFKLDSSAL. In terms of domain architecture, Protein kinase spans 35 to 286; that stretch reads FDIVGKLGEG…ALRLCEHTFI (252 aa). Residues 41 to 49 and lysine 64 contribute to the ATP site; that span reads LGEGSYGSV. Aspartate 154 functions as the Proton acceptor in the catalytic mechanism. Positions 364–413 are disordered; it reads IPKSAYGSSRNNGSPRVQPPGHTASACDPSNNPPFAEEGTGPNFQIGTSE. Polar residues predominate over residues 369 to 378; sequence YGSSRNNGSP. An SARAH domain is found at 443 to 490; sequence FEFLRNITLDELIRRKESLDSEMEEEIRELQRRYKTKRQPILDVIEIK.

The protein belongs to the protein kinase superfamily. STE Ser/Thr protein kinase family. STE20 subfamily. Mg(2+) serves as cofactor. Post-translationally, proteolytically cleaved by caspase-3 during apoptosis which results in kinase activation.

It carries out the reaction L-seryl-[protein] + ATP = O-phospho-L-seryl-[protein] + ADP + H(+). It catalyses the reaction L-threonyl-[protein] + ATP = O-phospho-L-threonyl-[protein] + ADP + H(+). Serine/threonine-protein kinase which extends lifespan and delays tissue aging, probably by activating daf-16. The polypeptide is Serine/threonine-protein kinase cst-1 (cst-1) (Caenorhabditis briggsae).